Reading from the N-terminus, the 201-residue chain is Small ribosomal subunit protein uS4c (201 aa).

The S4 RNA-binding domain maps to 89–152; the sequence is MRLDNILFRL…NSRTLVQNLL (64 aa).

This sequence belongs to the universal ribosomal protein uS4 family. As to quaternary structure, part of the 30S ribosomal subunit. Contacts protein S5. The interaction surface between S4 and S5 is involved in control of translational fidelity.

The protein localises to the plastid. The protein resides in the chloroplast. Functionally, one of the primary rRNA binding proteins, it binds directly to 16S rRNA where it nucleates assembly of the body of the 30S subunit. Its function is as follows. With S5 and S12 plays an important role in translational accuracy. This is Small ribosomal subunit protein uS4c (rps4) from Arabidopsis thaliana (Mouse-ear cress).